The following is an 84-amino-acid chain: Large ribosomal subunit protein bL27 (84 aa).

Residues methionine 1 to leucine 21 form a disordered region. Over residues asparagine 12–leucine 21 the composition is skewed to basic and acidic residues.

This sequence belongs to the bacterial ribosomal protein bL27 family.

This chain is Large ribosomal subunit protein bL27, found in Methylacidiphilum infernorum (isolate V4) (Methylokorus infernorum (strain V4)).